A 596-amino-acid chain; its full sequence is Nitrite reductase (596 aa).

The N-terminal stretch at 1–29 (MRQRTPFARPGLLASAALALVLGPLAVAA) is a signal peptide. Positions 30 to 76 (QEQAAPPKDPAAALEDHKTKTDNRYEPSLDNLAQQDVAALGAPEGIP) are N-terminal tail. His-46 lines the heme c pocket. Residues Tyr-54 and Ser-57 each coordinate heme d1. The 86-residue stretch at 77–162 (ALSDAQYNEA…ANYLLLDPAA (86 aa)) folds into the Cytochrome c domain. The heme c site is built by Cys-94, Cys-97, His-98, Lys-108, and Tyr-122. Heme d1 contacts are provided by Trp-138, Arg-203, His-229, Arg-232, Arg-245, Arg-272, Tyr-292, Arg-420, Gln-536, and Thr-583. The tract at residues 163–596 (PPEFGMKEMR…NVYNTMTDTY (434 aa)) is D1-heme domain.

As to quaternary structure, homodimer. The cofactor is heme c. Requires heme as cofactor.

Its subcellular location is the periplasm. The catalysed reaction is nitric oxide + Fe(III)-[cytochrome c] + H2O = Fe(II)-[cytochrome c] + nitrite + 2 H(+). It catalyses the reaction A + NH4(+) + H2O = hydroxylamine + AH2 + H(+). Its function is as follows. Inactivation of this cytochrome oxidase results in the loss of nitrite and nitric oxide reductase activities, but not of nitrous oxide reductase activity. The chain is Nitrite reductase (nirS) from Paracoccus denitrificans (strain Pd 1222).